A 777-amino-acid chain; its full sequence is Ribosome biogenesis protein ERB1 (777 aa).

A disordered region spans residues 1–122 (MAPTAPAKKR…RPNYRVVEDA (122 aa)). Over residues 36-67 (SEDDSDFVASGDEDEEDEDEDEDEDKDEDDEH) the composition is skewed to acidic residues. WD repeat units lie at residues 430-469 (GHEGRVRSSAIDPTGLWLATGGDDGYVRIWLINPARQVWA), 473-513 (SSDE…PEVE), 562-604 (TVRS…SQIP), 606-645 (RKLSGLAQVAHFHPSRPLFFVATQRTIRCYDLQRLELVKV), 648-687 (PGARWISSFDIHPGGDNLIVGSYDRRLLWHDLDLSTRPYK), 691-731 (FHPQ…DLME), and 747-777 (VDSLGVMDVDWHPSEPWCISAGADGTCRLWM).

Belongs to the WD repeat BOP1/ERB1 family. As to quaternary structure, component of the NOP7 complex, composed of ERB1, NOP7 and YTM1. The complex is held together by ERB1, which interacts with NOP7 via its N-terminal domain and with YTM1 via a high-affinity interaction between the seven-bladed beta-propeller domains of the 2 proteins. The NOP7 complex associates with the 66S pre-ribosome.

The protein localises to the nucleus. Its subcellular location is the nucleolus. It localises to the nucleoplasm. Component of the NOP7 complex, which is required for maturation of the 25S and 5.8S ribosomal RNAs and formation of the 60S ribosome. The sequence is that of Ribosome biogenesis protein ERB1 from Pyricularia oryzae (strain 70-15 / ATCC MYA-4617 / FGSC 8958) (Rice blast fungus).